Here is a 627-residue protein sequence, read N- to C-terminus: (R)-linalool synthase, chloroplastic (627 aa).

A chloroplast-targeting transit peptide spans 1–21; that stretch reads MAFVSIAPLASRCCVHKSFVS. Positions 378, 382, and 530 each coordinate Mg(2+). Positions 378–382 match the DDXXD motif motif; the sequence is DDIYD.

Belongs to the terpene synthase family. Tpsd subfamily. It depends on Mg(2+) as a cofactor. Requires Mn(2+) as cofactor.

It localises to the plastid. The protein localises to the chloroplast. It catalyses the reaction (2E)-geranyl diphosphate + H2O = (R)-linalool + diphosphate. It participates in terpene metabolism; oleoresin biosynthesis. In terms of biological role, terpene synthase (TPS) involved in the biosynthesis of monoterpene natural products included in conifer oleoresin secretions and volatile emissions; these compounds contribute to biotic and abiotic stress defense against herbivores and pathogens. Catalyzes the conversion of (2E)-geranyl diphosphate (GPP) to (R)-linalool. This is (R)-linalool synthase, chloroplastic from Picea glauca (White spruce).